The following is a 339-amino-acid chain: Uroporphyrinogen decarboxylase (339 aa).

Substrate contacts are provided by residues 23-27, Asp-72, Tyr-147, Ser-202, and His-315; that span reads RQAGR.

Belongs to the uroporphyrinogen decarboxylase family. As to quaternary structure, homodimer.

It is found in the cytoplasm. The enzyme catalyses uroporphyrinogen III + 4 H(+) = coproporphyrinogen III + 4 CO2. Its pathway is porphyrin-containing compound metabolism; protoporphyrin-IX biosynthesis; coproporphyrinogen-III from 5-aminolevulinate: step 4/4. In terms of biological role, catalyzes the decarboxylation of four acetate groups of uroporphyrinogen-III to yield coproporphyrinogen-III. This is Uroporphyrinogen decarboxylase from Desulfotalea psychrophila (strain LSv54 / DSM 12343).